A 489-amino-acid chain; its full sequence is Adenylosuccinate synthetase 2, chloroplastic (489 aa).

A chloroplast-targeting transit peptide spans 1–45 (MPFSPPCLDPAAAAAASLSFLPAAAARPPAPCAVAPRSRRALRVA). Residues 76 to 82 (GDEGKGK) and 104 to 106 (GHT) each bind GTP. The active-site Proton acceptor is the aspartate 77. Positions 77 and 104 each coordinate Mg(2+). Residues 77 to 80 (DEGK), 102 to 105 (NAGH), threonine 194, arginine 208, glutamine 288, threonine 303, and arginine 367 each bind IMP. Catalysis depends on histidine 105, which acts as the Proton donor. Substrate is bound at residue 363 to 369 (TTTGRPR). Residues arginine 369, 395–397 (KLD), and 478–480 (GVG) contribute to the GTP site.

The protein belongs to the adenylosuccinate synthetase family. Homodimer. Mg(2+) serves as cofactor.

It is found in the plastid. It localises to the chloroplast. It catalyses the reaction IMP + L-aspartate + GTP = N(6)-(1,2-dicarboxyethyl)-AMP + GDP + phosphate + 2 H(+). Its pathway is purine metabolism; AMP biosynthesis via de novo pathway; AMP from IMP: step 1/2. Functionally, plays an important role in the de novo pathway and in the salvage pathway of purine nucleotide biosynthesis. Catalyzes the first committed step in the biosynthesis of AMP from IMP. The protein is Adenylosuccinate synthetase 2, chloroplastic of Oryza sativa subsp. japonica (Rice).